The following is a 344-amino-acid chain: Phosphoribosylformylglycinamidine cyclo-ligase (344 aa).

It belongs to the AIR synthase family.

The protein localises to the cytoplasm. The catalysed reaction is 2-formamido-N(1)-(5-O-phospho-beta-D-ribosyl)acetamidine + ATP = 5-amino-1-(5-phospho-beta-D-ribosyl)imidazole + ADP + phosphate + H(+). It participates in purine metabolism; IMP biosynthesis via de novo pathway; 5-amino-1-(5-phospho-D-ribosyl)imidazole from N(2)-formyl-N(1)-(5-phospho-D-ribosyl)glycinamide: step 2/2. This Anaeromyxobacter sp. (strain Fw109-5) protein is Phosphoribosylformylglycinamidine cyclo-ligase.